We begin with the raw amino-acid sequence, 420 residues long: Putative T-box protein 33 (420 aa).

The T-box DNA-binding region spans 93–291; the sequence is LWKELHYLSN…ANPTSRGDAK (199 aa). Over residues 395–412 the composition is skewed to polar residues; it reads SPPLQPTATSPEASQNQI. Residues 395–420 form a disordered region; it reads SPPLQPTATSPEASQNQIKLEMNQYM.

Its subcellular location is the nucleus. In Caenorhabditis elegans, this protein is Putative T-box protein 33 (tbx-33).